The chain runs to 107 residues: METIAFRMVLNPGMREEYERRHAQIWPELVDALHNAGVRDYRIFFDPDSHHLFAMLTRHNHHTMNELPQLDVMRKWWDYMADIMQTAADHTPLQQPLEPVFHLNSLS.

A substrate-binding site is contributed by Tyr-18. Catalysis depends on His-22, which acts as the Proton donor. Substrate-binding positions include Tyr-41 and Trp-76–Trp-77.

The protein belongs to the rhamnose mutarotase family. Homodimer.

Its subcellular location is the cytoplasm. It catalyses the reaction alpha-L-rhamnose = beta-L-rhamnose. It participates in carbohydrate metabolism; L-rhamnose metabolism. Its function is as follows. Involved in the anomeric conversion of L-rhamnose. The sequence is that of L-rhamnose mutarotase from Paraburkholderia xenovorans (strain LB400).